Reading from the N-terminus, the 97-residue chain is UPF0250 protein RSc0326 (97 aa).

It belongs to the UPF0250 family.

This chain is UPF0250 protein RSc0326, found in Ralstonia nicotianae (strain ATCC BAA-1114 / GMI1000) (Ralstonia solanacearum).